We begin with the raw amino-acid sequence, 375 residues long: Succinyl-diaminopimelate desuccinylase (375 aa).

Position 66 (His66) interacts with Zn(2+). The active site involves Asp68. Position 99 (Asp99) interacts with Zn(2+). Glu133 (proton acceptor) is an active-site residue. Zn(2+) contacts are provided by Glu134, Glu162, and His348.

Belongs to the peptidase M20A family. DapE subfamily. In terms of assembly, homodimer. It depends on Zn(2+) as a cofactor. Requires Co(2+) as cofactor.

It carries out the reaction N-succinyl-(2S,6S)-2,6-diaminopimelate + H2O = (2S,6S)-2,6-diaminopimelate + succinate. It participates in amino-acid biosynthesis; L-lysine biosynthesis via DAP pathway; LL-2,6-diaminopimelate from (S)-tetrahydrodipicolinate (succinylase route): step 3/3. In terms of biological role, catalyzes the hydrolysis of N-succinyl-L,L-diaminopimelic acid (SDAP), forming succinate and LL-2,6-diaminopimelate (DAP), an intermediate involved in the bacterial biosynthesis of lysine and meso-diaminopimelic acid, an essential component of bacterial cell walls. The sequence is that of Succinyl-diaminopimelate desuccinylase from Janthinobacterium sp. (strain Marseille) (Minibacterium massiliensis).